Here is a 233-residue protein sequence, read N- to C-terminus: Orotidine 5'-phosphate decarboxylase (233 aa).

Residues Asp9, Lys31, Asp58 to Thr67, Thr120, Arg182, Gln191, Gly211, and Arg212 each bind substrate. Lys60 acts as the Proton donor in catalysis.

Belongs to the OMP decarboxylase family. Type 1 subfamily. Homodimer.

It catalyses the reaction orotidine 5'-phosphate + H(+) = UMP + CO2. It functions in the pathway pyrimidine metabolism; UMP biosynthesis via de novo pathway; UMP from orotate: step 2/2. Functionally, catalyzes the decarboxylation of orotidine 5'-monophosphate (OMP) to uridine 5'-monophosphate (UMP). The sequence is that of Orotidine 5'-phosphate decarboxylase from Listeria innocua serovar 6a (strain ATCC BAA-680 / CLIP 11262).